The following is a 334-amino-acid chain: Dipeptide transport ATP-binding protein DppF (334 aa).

Positions Leu13–Leu262 constitute an ABC transporter domain. Gly55–Ser62 serves as a coordination point for ATP.

It belongs to the ABC transporter superfamily. As to quaternary structure, the complex is composed of two ATP-binding proteins (DppD and DppF), two transmembrane proteins (DppB and DppC) and a solute-binding protein (DppA). MppA can replace DppA as binding protein for heme and ALA transport.

It is found in the cell inner membrane. The enzyme catalyses a dipeptide(out) + ATP + H2O = a dipeptide(in) + ADP + phosphate + H(+). Functionally, part of the ABC transporter DppABCDF involved in dipeptide transport. Responsible for energy coupling to the transport system. In terms of biological role, when a foreign outer membrane heme receptor is expressed in E.coli, DppABCDF can also transport heme and its precursor, 5-aminolevulinic acid (ALA), from the periplasm into the cytoplasm. The chain is Dipeptide transport ATP-binding protein DppF (dppF) from Escherichia coli (strain K12).